The primary structure comprises 775 residues: Phosphoribosylformylglycinamidine synthase subunit PurL (775 aa).

The active site involves histidine 81. ATP is bound by residues tyrosine 84 and lysine 123. Glutamate 125 is a Mg(2+) binding site. Residues 126-129 (SHNH) and arginine 148 contribute to the substrate site. The Proton acceptor role is filled by histidine 127. Aspartate 149 is a binding site for Mg(2+). Glutamine 272 provides a ligand contact to substrate. Aspartate 300 contributes to the Mg(2+) binding site. 344–346 (ESQ) serves as a coordination point for substrate. Residues aspartate 525 and glycine 562 each coordinate ATP. Asparagine 563 serves as a coordination point for Mg(2+). Residue serine 565 participates in substrate binding.

Belongs to the FGAMS family. Monomer. Part of the FGAM synthase complex composed of 1 PurL, 1 PurQ and 2 PurS subunits.

The protein localises to the cytoplasm. The catalysed reaction is N(2)-formyl-N(1)-(5-phospho-beta-D-ribosyl)glycinamide + L-glutamine + ATP + H2O = 2-formamido-N(1)-(5-O-phospho-beta-D-ribosyl)acetamidine + L-glutamate + ADP + phosphate + H(+). Its pathway is purine metabolism; IMP biosynthesis via de novo pathway; 5-amino-1-(5-phospho-D-ribosyl)imidazole from N(2)-formyl-N(1)-(5-phospho-D-ribosyl)glycinamide: step 1/2. In terms of biological role, part of the phosphoribosylformylglycinamidine synthase complex involved in the purines biosynthetic pathway. Catalyzes the ATP-dependent conversion of formylglycinamide ribonucleotide (FGAR) and glutamine to yield formylglycinamidine ribonucleotide (FGAM) and glutamate. The FGAM synthase complex is composed of three subunits. PurQ produces an ammonia molecule by converting glutamine to glutamate. PurL transfers the ammonia molecule to FGAR to form FGAM in an ATP-dependent manner. PurS interacts with PurQ and PurL and is thought to assist in the transfer of the ammonia molecule from PurQ to PurL. The sequence is that of Phosphoribosylformylglycinamidine synthase subunit PurL from Agrobacterium fabrum (strain C58 / ATCC 33970) (Agrobacterium tumefaciens (strain C58)).